Consider the following 366-residue polypeptide: Galactoside alpha-(1,2)-fucosyltransferase 1 (366 aa).

The Cytoplasmic segment spans residues 1–8 (MWPPSHRQ). The chain crosses the membrane as a helical; Signal-anchor for type II membrane protein span at residues 9-25 (LCRAFLLVCVFSVISFF). Residues 26-366 (LHIHQDSFPH…LSPLWTLAKP (341 aa)) are Lumenal-facing. N-linked (GlcNAc...) asparagine glycosylation is found at Asn-66, Asn-302, and Asn-328.

The protein belongs to the glycosyltransferase 11 family.

The protein resides in the golgi apparatus. The protein localises to the golgi stack membrane. The enzyme catalyses a beta-D-galactosyl-(1-&gt;4)-N-acetyl-beta-D-glucosaminyl derivative + GDP-beta-L-fucose = an alpha-L-Fuc-(1-&gt;2)-beta-D-Gal-(1-&gt;4)-beta-D-GlcNAc derivative + GDP + H(+). It carries out the reaction a ganglioside GA1 + GDP-beta-L-fucose = a ganglioside Fuc-GA1 + GDP + H(+). The catalysed reaction is a beta-D-Gal-(1-&gt;3)-beta-D-GlcNAc-(1-&gt;3)-beta-D-Gal-(1-&gt;4)-beta-D-Glc-(1&lt;-&gt;1')-Cer(d18:1(4E)) + GDP-beta-L-fucose = alpha-L-fucosyl-(1-&gt;2)- beta-D-galactosyl-(1-&gt;3)-N-acetyl-beta-D-glucosaminyl-(1-&gt;3)-beta-D-galactosyl-(1-&gt;4)-beta-D-glucosyl-(1&lt;-&gt;1')-N-acylsphing-4-enine + GDP + H(+). It catalyses the reaction a neolactoside nLc4Cer(d18:1(4E)) + GDP-beta-L-fucose = a neolactoside IV(2)-alpha-Fuc-nLc4Cer(d18:1(4E)) + GDP + H(+). The enzyme catalyses a ganglioside GM1 + GDP-beta-L-fucose = a ganglioside Fuc-GM1 + GDP + H(+). It carries out the reaction beta-D-galactosyl-(1-&gt;3)-N-acetyl-D-galactosamine + GDP-beta-L-fucose = alpha-L-fucosyl-(1-&gt;2)-beta-D-galactosyl-(1-&gt;3)-N-acetyl-D-galactosamine + GDP + H(+). Its pathway is protein modification; protein glycosylation. Functionally, catalyzes the transfer of L-fucose, from a guanosine diphosphate-beta-L-fucose, to the terminal galactose residue of glycoconjugates through an alpha(1,2) linkage leading to H antigen synthesis that is an intermediate substrate in the synthesis of ABO blood group antigens. H antigen is essential for maturation of the glomerular layer of the main olfactory bulb, in cell migration and early cell-cell contacts during tumor associated angiogenesis. Preferentially fucosylates soluble lactose and to a lesser extent fucosylates glycolipids gangliosides GA1 and GM1a. This chain is Galactoside alpha-(1,2)-fucosyltransferase 1, found in Gorilla gorilla gorilla (Western lowland gorilla).